Consider the following 4244-residue polypeptide: MMPAQYALTSSLVLLVLLSTARAGPFSSRSNVTLPAPRPPPQPGGHTVGAGVGSPSSQLYEHTVEGGEKQVVFTHRINLPPSTGCGCPPGTEPPVLASEVQALRVRLEILEELVKGLKEQCTGGCCPASAQAGTGQTDVRTLCSLHGVFDLSRCTCSCEPGWGGPTCSDPTDAEIPPSSPPSASGSCPDDCNDQGRCVRGRCVCFPGYTGPSCGWPSCPGDCQGRGRCVQGVCVCRAGFSGPDCSQRSCPRGCSQRGRCEGGRCVCDPGYTGDDCGMRSCPRGCSQRGRCENGRCVCNPGYTGEDCGVRSCPRGCSQRGRCKDGRCVCDPGYTGEDCGTRSCPWDCGEGGRCVDGRCVCWPGYTGEDCSTRTCPRDCRGRGRCEDGECICDTGYSGDDCGVRSCPGDCNQRGRCEDGRCVCWPGYTGTDCGSRACPRDCRGRGRCENGVCVCNAGYSGEDCGVRSCPGDCRGRGRCESGRCMCWPGYTGRDCGTRACPGDCRGRGRCVDGRCVCNPGFTGEDCGSRRCPGDCRGHGLCEDGVCVCDAGYSGEDCSTRSCPGGCRGRGQCLDGRCVCEDGYSGEDCGVRQCPNDCSQHGVCQDGVCICWEGYVSEDCSIRTCPSNCHGRGRCEEGRCLCDPGYTGPTCATRMCPADCRGRGRCVQGVCLCHVGYGGEDCGQEEPPASACPGGCGPRELCRAGQCVCVEGFRGPDCAIQTCPGDCRGRGECHDGSCVCKDGYAGEDCGEEVPTIEGMRMHLLEETTVRTEWTPAPGPVDAYEIQFIPTTEGASPPFTARVPSSASAYDQRGLAPGQEYQVTVRALRGTSWGLPASKTITTMIDGPQDLRVVAVTPTTLELGWLRPQAEVDRFVVSYVSAGNQRVRLEVPPEADGTLLTDLMPGVEYVVTVTAERGRAVSYPASVRANTGSSPLGLLGTTDEPPPSGPSTTQGAQAPLLQQRPQELGELRVLGRDETGRLRVVWTAQPDTFAYFQLRMRVPEGPGAHEEVLPGDVRQALVPPPPPGTPYELSLHGVPPGGKPSDPIIYQGIMDKDEEKPGKSSGPPRLGELTVTDRTSDSLLLRWTVPEGEFDSFVIQYKDRDGQPQVVPVEGPQRSAVITSLDPGRKYKFVLYGFVGKKRHGPLVAEAKILPQSDPSPGTPPHLGNLWVTDPTPDSLHLSWTVPEGQFDTFMVQYRDRDGRPQVVPVEGPERSFVVSSLDPDHKYRFTLFGIANKKRYGPLTADGTTAPERKEEPPRPEFLEQPLLGELTVTGVTPDSLRLSWTVAQGPFDSFMVQYKDAQGQPQAVPVAGDENEVTVPGLDPDRKYKMNLYGLRGRQRVGPESVVAKTAPQEDVDETPSPTELGTEAPESPEEPLLGELTVTGSSPDSLSLFWTVPQGSFDSFTVQYKDRDGRPRAVRVGGKESEVTVGGLEPGHKYKMHLYGLHEGQRVGPVSAVGVTAPQQEETPPATESPLEPRLGELTVTDVTPNSVGLSWTVPEGQFDSFIVQYKDKDGQPQVVPVAADQREVTVYNLEPERKYKMNMYGLHDGQRMGPLSVVIVTAPLPPAPATEASKPPLEPRLGELTVTDITPDSVGLSWTVPEGEFDSFVVQYKDRDGQPQVVPVAADQREVTIPDLEPSRKYKFLLFGIQDGKRRSPVSVEAKTVARGDASPGAPPRLGELWVTDPTPDSLRLSWTVPEGQFDSFVVQFKDKDGPQVVPVEGHERSVTVTPLDAGRKYRFLLYGLLGKKRHGPLTADGTTEARSAMDDTGTKRPPKPRLGEELQVTTVTQNSVGLSWTVPEGQFDSFVVQYKDRDGQPQVVPVEGSLREVSVPGLDPAHRYKLLLYGLHHGKRVGPISAVAITAGREETETETTAPTPPAPEPHLGELTVEEATSHTLHLSWMVTEGEFDSFEIQYTDRDGQLQMVRIGGDRNDITLSGLESDHRYLVTLYGFSDGKHVGPVHVEALTVPEEEKPSEPPTATPEPPIKPRLGELTVTDATPDSLSLSWTVPEGQFDHFLVQYRNGDGQPKAVRVPGHEEGVTISGLEPDHKYKMNLYGFHGGQRMGPVSVVGVTAAEEETPSPTEPSMEAPEPAEEPLLGELTVTGSSPDSLSLSWTVPQGRFDSFTVQYKDRDGRPQVVRVGGEESEVTVGGLEPGRKYKMHLYGLHEGRRVGPVSAVGVTAPEEESPDAPLAKLRLGQMTVRDITSDSLSLSWTVPEGQFDHFLVQFKNGDGQPKAVRVPGHEDGVTISGLEPDHKYKMNLYGFHGGQRVGPVSAVGLTAPGKDEEMAPASTEPPTPEPPIKPRLEELTVTDATPDSLSLSWTVPEGQFDHFLVQYKNGDGQPKATRVPGHEDRVTISGLEPDNKYKMNLYGFHGGQRVGPVSAIGVTAAEEETPSPTEPSMEAPEPPEEPLLGELTVTGSSPDSLSLSWTVPQGRFDSFTVQYKDRDGRPQVVRVGGEESEVTVGGLEPGRKYKMHLYGLHEGRRVGPVSTVGVTAPQEDVDETPSPTEPGTEAPGPPEEPLLGELTVTGSSPDSLSLSWTVPQGRFDSFTVQYKDRDGRPQAVRVGGQESKVTVRGLEPGRKYKMHLYGLHEGRRLGPVSAVGVTEDEAETTQAVPTMTPEPPIKPRLGELTMTDATPDSLSLSWTVPEGQFDHFLVQYRNGDGQPKAVRVPGHEDGVTISGLEPDHKYKMNLYGFHGGQRVGPISVIGVTAAEEETPSPTELSTEAPEPPEEPLLGELTVTGSSPDSLSLSWTIPQGHFDSFTVQYKDRDGRPQVMRVRGEESEVTVGGLEPGRKYKMHLYGLHEGRRVGPVSTVGVTAPEDEAETTQAVPTTTPEPPNKPRLGELTVTDATPDSLSLSWMVPEGQFDHFLVQYRNGDGQPKVVRVPGHEDGVTISGLEPDHKYKMNLYGFHGGQRVGPISVIGVTAAEEETPAPTEPSTEAPEPPEEPLLGELTVTGSSPDSLSLSWTIPQGRFDSFTVQYKDRDGRPQVVRVRGEESEVTVGGLEPGCKYKMHLYGLHEGQRVGPVSAVGVTAPKDEAETTQAVPTMTPEPPIKPRLGELTVTDATPDSLSLSWMVPEGQFDHFLVQYRNGDGQPKAVRVPGHEDGVTISGLEPDHKYKMNLYGFHGGQRVGPVSAIGVTEEETPSPTEPSTEAPEAPEEPLLGELTVTGSSPDSLSLSWTVPQGRFDSFTVQYKDRDGQPQVVRVRGEESEVTVGGLEPGRKYKMHLYGLHEGQRVGPVSTVGITAPLPTPLPVEPRLGELAVAAVTSDSVGLSWTVAQGPFDSFLVQYRDAQGQPQAVPVSGDLRAVAVSGLDPARKYKFLLFGLQNGKRHGPVPVEARTAPDTKPSPRLGELTVTDATPDSVGLSWTVPEGEFDSFVVQYKDKDGRLQVVPVAANQREVTVQGLEPSRKYRFLLYGLSGRKRLGPISADSTTAPLEKELPPHLGELTVAEETSSSLRLSWTVAQGPFDSFVVQYRDTDGQPRAVPVAADQRTVTVEDLEPGKKYKFLLYGLLGGKRLGPVSALGMTAPEEDTPAPELAPEAPEPPEEPRLGVLTVTDTTPDSMRLSWSVAQGPFDSFVVQYEDTNGQPQALLVDGDQSKILISGLEPSTPYRFLLYGLHEGKRLGPLSAEGTTGLAPAGQTSEESRPRLSQLSVTDVTTSSLRLNWEAPPGAFDSFLLRFGVPSPSTLEPHPRPLLQRELMVPGTRHSAVLRDLRSGTLYSLTLYGLRGPHKADSIQGTARTLSPVLESPRDLQFSEIRETSAKVNWMPPPSRADSFKVSYQLADGGEPQSVQVDGQARTQKLQGLIPGARYEVTVVSVRGFEESEPLTGFLTTVPDGPTQLRALNLTEGFAVLHWKPPQNPVDTYDVQVTAPGAPPLQAETPGSAVDYPLHDLVLHTNYTATVRGLRGPNLTSPASITFTTGLEAPRDLEAKEVTPRTALLTWTEPPVRPAGYLLSFHTPGGQNQEILLPGGITSHQLLGLFPSTSYNARLQAMWGQSLLPPVSTSFTTGGLRIPFPRDCGEEMQNGAGASRTSTIFLNGNRERPLNVFCDMETDGGGWLVFQRRMDGQTDFWRDWEDYAHGFGNISGEFWLGNEALHSLTQAGDYSMRVDLRAGDEAVFAQYDSFHVDSAAEYYRLHLEGYHGTAGDSMSYHSGSVFSARDRDPNSLLISCAVSYRGAWWYRNCHYANLNGLYGSTVDHQGVSWYHWKGFEFSVPFTEMKLRPRNFRSPAGGG.

An N-terminal signal peptide occupies residues 1-23 (MMPAQYALTSSLVLLVLLSTARA). Residues 27-57 (SSRSNVTLPAPRPPPQPGGHTVGAGVGSPSS) are disordered. N-linked (GlcNAc...) asparagine glycosylation is present at asparagine 31. The EGF-like 1; incomplete domain maps to 156-168 (CSCEPGWGGPTCS). The disordered stretch occupies residues 169-189 (DPTDAEIPPSSPPSASGSCPD). EGF-like domains lie at 183 to 213 (ASGS…GPSC), 214 to 244 (GWPS…GPDC), 245 to 275 (SQRS…GDDC), 276 to 306 (GMRS…GEDC), 307 to 337 (GVRS…GEDC), 338 to 368 (GTRS…GEDC), 369 to 399 (STRT…GDDC), 400 to 430 (GVRS…GTDC), 431 to 461 (GSRA…GEDC), 462 to 492 (GVRS…GRDC), 493 to 523 (GTRA…GEDC), 524 to 554 (GSRR…GEDC), 555 to 585 (STRS…GEDC), 586 to 616 (GVRQ…SEDC), 617 to 647 (SIRT…GPTC), 648 to 679 (ATRM…EDCG), 684 to 714 (PASA…GPDC), and 715 to 746 (AIQT…EDCG). Intrachain disulfides connect cysteine 187/cysteine 197, cysteine 191/cysteine 202, cysteine 204/cysteine 213, cysteine 218/cysteine 228, cysteine 222/cysteine 233, cysteine 235/cysteine 244, cysteine 249/cysteine 259, cysteine 253/cysteine 264, cysteine 266/cysteine 275, cysteine 280/cysteine 290, cysteine 284/cysteine 295, cysteine 297/cysteine 306, cysteine 311/cysteine 321, cysteine 315/cysteine 326, cysteine 328/cysteine 337, cysteine 342/cysteine 352, cysteine 346/cysteine 357, cysteine 359/cysteine 368, cysteine 373/cysteine 383, cysteine 377/cysteine 388, cysteine 390/cysteine 399, cysteine 404/cysteine 414, cysteine 408/cysteine 419, cysteine 421/cysteine 430, cysteine 435/cysteine 445, cysteine 439/cysteine 450, cysteine 452/cysteine 461, cysteine 466/cysteine 476, cysteine 470/cysteine 481, cysteine 483/cysteine 492, cysteine 497/cysteine 507, cysteine 501/cysteine 512, cysteine 514/cysteine 523, cysteine 528/cysteine 538, cysteine 532/cysteine 543, cysteine 545/cysteine 554, cysteine 559/cysteine 569, cysteine 563/cysteine 574, cysteine 576/cysteine 585, cysteine 590/cysteine 600, cysteine 594/cysteine 605, cysteine 607/cysteine 616, cysteine 621/cysteine 631, cysteine 625/cysteine 636, cysteine 638/cysteine 647, cysteine 652/cysteine 662, cysteine 656/cysteine 667, cysteine 669/cysteine 678, cysteine 688/cysteine 698, cysteine 692/cysteine 703, cysteine 705/cysteine 714, cysteine 719/cysteine 729, cysteine 723/cysteine 734, and cysteine 736/cysteine 745. The tract at residues 926-956 (TGSSPLGLLGTTDEPPPSGPSTTQGAQAPLL) is disordered. Fibronectin type-III domains are found at residues 959–1051 (RPQE…IMDK), 1064–1153 (RLGE…PQSD), 1161–1249 (HLGN…APER), 1263–1352 (LLGE…PQED), 1374–1468 (LLGE…TPPA), 1476–1572 (RLGE…TEAS), 1574–1669 (PPLE…RGDA), 1674–1764 (PPRL…ARSA), 1778–1868 (LGEE…REET), and 1883–1971 (HLGE…VPEE). Positions 1340 to 1372 (PESVVAKTAPQEDVDETPSPTELGTEAPESPEE) are disordered. The short motif at 1666 to 1668 (RGD) is the Cell attachment site element. Positions 1752–1777 (PLTADGTTEARSAMDDTGTKRPPKPR) are disordered. The tract at residues 1968 to 1990 (VPEEEKPSEPPTATPEPPIKPRL) is disordered. Residues 1976–1987 (EPPTATPEPPIK) are compositionally biased toward pro residues. Fibronectin type-III domains are found at residues 1989–2089 (RLGE…SMEA), 2097–2185 (LLGE…APEE), 2196–2296 (RLGQ…TEPP), 2305–2398 (RLEE…TPSP), and 2408–2502 (PPEE…PQED). A disordered region spans residues 2281-2304 (APGKDEEMAPASTEPPTPEPPIKP). The segment at 2495 to 2542 (GVTAPQEDVDETPSPTEPGTEAPGPPEEPLLGELTVTGSSPDSLSLSW) is disordered. Over residues 2506 to 2516 (TPSPTEPGTEA) the composition is skewed to low complexity. Fibronectin type-III domains follow at residues 2519 to 2617 (PPEE…TTQA), 2625 to 2723 (PPIK…TPSP), 2733 to 2840 (PPEE…TTPE), 2841 to 2939 (PPNK…TPAP), 2949 to 3042 (PPEE…APKD), 3062 to 3153 (RLGE…TPSP), 3168 to 3260 (LLGE…TPLP), 3264 to 3355 (RLGE…TKPS), 3357 to 3446 (RLGE…PLEK), 3451 to 3544 (HLGE…TPAP), 3553 to 3647 (PPEE…LAPA), 3657 to 3754 (RLSQ…TLSP), 3758 to 3847 (SPRD…VPDG), 3848 to 3934 (PTQL…TGLE), and 3935 to 4025 (APRD…LRIP). The span at 2530–2542 (VTGSSPDSLSLSW) shows a compositional bias: polar residues. Disordered stretches follow at residues 2824-2847 (PEDE…KPRL) and 2933-2969 (EEET…DSLS). The span at 2937-2946 (PAPTEPSTEA) shows a compositional bias: low complexity. Residues 2960–2969 (VTGSSPDSLS) show a composition bias toward polar residues. Disordered stretches follow at residues 3536–3559 (APEE…EPRL) and 3636–3662 (LSAE…SQLS). N-linked (GlcNAc...) asparagine glycosylation is found at asparagine 3855, asparagine 3908, and asparagine 3920. In terms of domain architecture, Fibrinogen C-terminal spans 4021–4236 (GLRIPFPRDC…FTEMKLRPRN (216 aa)). Cysteine 4030 and cysteine 4060 are joined by a disulfide. Residue asparagine 4095 is glycosylated (N-linked (GlcNAc...) asparagine). Residues cysteine 4182 and cysteine 4195 are joined by a disulfide bond.

The protein belongs to the tenascin family. Homotrimer. Interacts with type I, III and V collagens and tropoelastin via its 29th fibronectin type-III domain. In terms of tissue distribution, highly expressed in fetal adrenal, in fetal testis, fetal smooth, striated and cardiac muscle. Isoform XB-short is only expressed in the adrenal gland.

The protein resides in the secreted. It localises to the extracellular space. Its subcellular location is the extracellular matrix. In terms of biological role, appears to mediate interactions between cells and the extracellular matrix. Substrate-adhesion molecule that appears to inhibit cell migration. Accelerates collagen fibril formation. May play a role in supporting the growth of epithelial tumors. The sequence is that of Tenascin-X from Homo sapiens (Human).